The primary structure comprises 224 residues: Urease accessory protein UreF (224 aa).

This sequence belongs to the UreF family. UreD, UreF and UreG form a complex that acts as a GTP-hydrolysis-dependent molecular chaperone, activating the urease apoprotein by helping to assemble the nickel containing metallocenter of UreC. The UreE protein probably delivers the nickel.

Its subcellular location is the cytoplasm. In terms of biological role, required for maturation of urease via the functional incorporation of the urease nickel metallocenter. The sequence is that of Urease accessory protein UreF from Escherichia coli O157:H7.